The primary structure comprises 229 residues: Large ribosomal subunit protein uL1 (229 aa).

This sequence belongs to the universal ribosomal protein uL1 family. In terms of assembly, part of the 50S ribosomal subunit.

Binds directly to 23S rRNA. The L1 stalk is quite mobile in the ribosome, and is involved in E site tRNA release. Functionally, protein L1 is also a translational repressor protein, it controls the translation of the L11 operon by binding to its mRNA. The sequence is that of Large ribosomal subunit protein uL1 from Latilactobacillus sakei subsp. sakei (strain 23K) (Lactobacillus sakei subsp. sakei).